Here is a 252-residue protein sequence, read N- to C-terminus: Imidazole glycerol phosphate synthase subunit HisF (252 aa).

Active-site residues include aspartate 11 and aspartate 130.

Belongs to the HisA/HisF family. In terms of assembly, heterodimer of HisH and HisF.

The protein resides in the cytoplasm. It catalyses the reaction 5-[(5-phospho-1-deoxy-D-ribulos-1-ylimino)methylamino]-1-(5-phospho-beta-D-ribosyl)imidazole-4-carboxamide + L-glutamine = D-erythro-1-(imidazol-4-yl)glycerol 3-phosphate + 5-amino-1-(5-phospho-beta-D-ribosyl)imidazole-4-carboxamide + L-glutamate + H(+). Its pathway is amino-acid biosynthesis; L-histidine biosynthesis; L-histidine from 5-phospho-alpha-D-ribose 1-diphosphate: step 5/9. In terms of biological role, IGPS catalyzes the conversion of PRFAR and glutamine to IGP, AICAR and glutamate. The HisF subunit catalyzes the cyclization activity that produces IGP and AICAR from PRFAR using the ammonia provided by the HisH subunit. This Bacillus thuringiensis (strain Al Hakam) protein is Imidazole glycerol phosphate synthase subunit HisF.